Reading from the N-terminus, the 776-residue chain is Isoamylase (776 aa).

Positions 1 to 26 (MKCPKILAALLGCAVLAGVPAMPAHA) are cleaved as a signal peptide. Ca(2+)-binding residues include Asp154, Glu255, Thr256, Asn258, and Asp285. Catalysis depends on Asp401, which acts as the Nucleophile. A disulfide bridge connects residues Cys410 and Cys422. Glu461 serves as the catalytic Proton donor. 2 disulfides stabilise this stretch: Cys546–Cys616 and Cys738–Cys766.

Belongs to the glycosyl hydrolase 13 family. In terms of assembly, monomer. The cofactor is Ca(2+).

The enzyme catalyses Hydrolysis of (1-&gt;6)-alpha-D-glucosidic branch linkages in glycogen, amylopectin and their beta-limit dextrins.. The polypeptide is Isoamylase (iam) (Pseudomonas sp. (strain SMP1)).